The sequence spans 384 residues: uncharacterized protein (384 aa).

Disordered stretches follow at residues Arg133–Asp257 and Glu297–Thr368. Residues Pro143–Ser157 show a composition bias toward low complexity. Positions Asp302 to Glu315 are enriched in acidic residues. Basic and acidic residues predominate over residues Gly316–Arg342. Residues Ser343–Arg363 are compositionally biased toward basic residues.

This is an uncharacterized protein from Gallid herpesvirus 2 (strain Chicken/Md5/ATCC VR-987) (GaHV-2).